We begin with the raw amino-acid sequence, 608 residues long: Protein transport protein SEC9 (608 aa).

Disordered stretches follow at residues 1 to 23 and 50 to 307; these read MGFK…SMQD and VTQK…QTAA. Positions 9-21 are enriched in basic and acidic residues; the sequence is KKDPTESEIRESM. Composition is skewed to low complexity over residues 54-67 and 74-85; these read SSAA…NPYA and SGGNPYAAAAAG. The segment covering 100–121 has biased composition (gly residues); it reads NGGGGNGGSNSNGGSNSNGGSN. Positions 122–134 are enriched in low complexity; it reads GSPYKMNNGGNNA. The segment covering 169–183 has biased composition (basic and acidic residues); that stretch reads SKKEEAPPPLEDPRL. A compositionally biased stretch (acidic residues) spans 198–215; it reads ERDDYEPVYDVGLPEEPE. The segment covering 241–260 has biased composition (basic and acidic residues); sequence NVDRELEEDKTALFGPRDDP. The region spanning 390 to 452 is the t-SNARE coiled-coil homology 1 domain; the sequence is RFTKQQSAAS…KIAEDKAKEL (63 aa). The interval 514 to 533 is disordered; that stretch reads GEKSKHRKEMMSKYGSRPGR. The 63-residue stretch at 545–607 folds into the t-SNARE coiled-coil homology 2 domain; the sequence is DILEDEIDNN…HLNTARLAGI (63 aa).

It belongs to the SNAP-25 family.

This Yarrowia lipolytica (strain CLIB 122 / E 150) (Yeast) protein is Protein transport protein SEC9 (SEC9).